Consider the following 466-residue polypeptide: Asparagine--tRNA ligase (466 aa).

Belongs to the class-II aminoacyl-tRNA synthetase family. Homodimer.

The protein localises to the cytoplasm. The catalysed reaction is tRNA(Asn) + L-asparagine + ATP = L-asparaginyl-tRNA(Asn) + AMP + diphosphate + H(+). In Salmonella choleraesuis (strain SC-B67), this protein is Asparagine--tRNA ligase.